The following is a 226-amino-acid chain: Neuron-specific vesicular protein calcyon (226 aa).

The segment at 1-21 (MVKLGCSFSGKPGKEAGDQDG) is disordered. Residues 1-88 (MVKLGCSFSG…EEGRRLPTAR (88 aa)) lie on the Extracellular side of the membrane. Residues 89-109 (MIAFAMALLGCVLIMYKAIWY) form a helical membrane-spanning segment. The Cytoplasmic portion of the chain corresponds to 110–226 (DQFTCPDGFL…AEGVPSQPPK (117 aa)). The segment at 177-226 (HKGTTPAAMAVSTAAAAAAAEGTEPSGKSLDTREKEDPQKAEGVPSQPPK) is disordered. Residues 183–196 (AAMAVSTAAAAAAA) show a composition bias toward low complexity. Residues 206–216 (LDTREKEDPQK) are compositionally biased toward basic and acidic residues.

This sequence belongs to the NSG family. In terms of assembly, interacts with CLTA. As to expression, most abundant in brain. Also expressed in testis and ovary and, at much lower levels, in kidney and heart.

It is found in the cytoplasmic vesicle membrane. The protein resides in the cell membrane. Functionally, interacts with clathrin light chain A and stimulates clathrin self-assembly and clathrin-mediated endocytosis. The polypeptide is Neuron-specific vesicular protein calcyon (Caly) (Mus musculus (Mouse)).